The following is a 475-amino-acid chain: 3-isopropylmalate dehydratase large subunit (475 aa).

3 residues coordinate [4Fe-4S] cluster: Cys353, Cys414, and Cys417.

This sequence belongs to the aconitase/IPM isomerase family. LeuC type 1 subfamily. In terms of assembly, heterodimer of LeuC and LeuD. The cofactor is [4Fe-4S] cluster.

It carries out the reaction (2R,3S)-3-isopropylmalate = (2S)-2-isopropylmalate. It participates in amino-acid biosynthesis; L-leucine biosynthesis; L-leucine from 3-methyl-2-oxobutanoate: step 2/4. In terms of biological role, catalyzes the isomerization between 2-isopropylmalate and 3-isopropylmalate, via the formation of 2-isopropylmaleate. This Stutzerimonas stutzeri (strain A1501) (Pseudomonas stutzeri) protein is 3-isopropylmalate dehydratase large subunit.